The chain runs to 272 residues: Catechol O-methyltransferase (272 aa).

The Cytoplasmic segment spans residues 1 to 6 (MLEAPP). The helical; Signal-anchor for type II membrane protein transmembrane segment at 7–27 (LLLVAGGVGLALLALRWLATT) threads the bilayer. Topologically, residues 28–272 (DLQFFGRAFI…YKGLSGPARP (245 aa)) are extracellular. S-adenosyl-L-methionine-binding positions include V93, E115, S123, E141, 168–171 (GASQ), S170, and D192. D192 contributes to the Mg(2+) binding site. K195 contacts substrate. 2 residues coordinate Mg(2+): D220 and N221. N221 and E250 together coordinate substrate. The residue at position 267 (S267) is a Phosphoserine.

The protein belongs to the class I-like SAM-binding methyltransferase superfamily. Cation-dependent O-methyltransferase family. Mg(2+) serves as cofactor.

It localises to the cytoplasm. The protein localises to the cell membrane. The catalysed reaction is a catechol + S-adenosyl-L-methionine = a guaiacol + S-adenosyl-L-homocysteine + H(+). The enzyme catalyses 2-hydroxyestrone + S-adenosyl-L-methionine = 2-hydroxy-3-methoxy-estrone + S-adenosyl-L-homocysteine + H(+). It carries out the reaction 4-hydroxyestrone + S-adenosyl-L-methionine = 4-methoxyestrone + S-adenosyl-L-homocysteine + H(+). It catalyses the reaction 2-hydroxyestrone + S-adenosyl-L-methionine = 2-methoxyestrone + S-adenosyl-L-homocysteine + H(+). The catalysed reaction is 4-hydroxy-17beta-estradiol + S-adenosyl-L-methionine = 4-methoxy-17beta-estradiol + S-adenosyl-L-homocysteine + H(+). The enzyme catalyses 2-hydroxy-17beta-estradiol + S-adenosyl-L-methionine = 2-hydroxy-3-methoxy-17beta-estradiol + S-adenosyl-L-homocysteine + H(+). It carries out the reaction 2-hydroxy-17beta-estradiol + S-adenosyl-L-methionine = 2-methoxy-17beta-estradiol + S-adenosyl-L-homocysteine + H(+). Functionally, catalyzes the O-methylation, and thereby the inactivation, of catecholamine neurotransmitters and catechol hormones. Also shortens the biological half-lives of certain neuroactive drugs, like L-DOPA, alpha-methyl DOPA and isoproterenol. The sequence is that of Catechol O-methyltransferase (COMT) from Bos taurus (Bovine).